Here is a 456-residue protein sequence, read N- to C-terminus: Phosphomethylpyrimidine synthase (456 aa).

Substrate-binding positions include Asn80, Met109, Tyr139, His175, 195 to 197 (SRG), 236 to 239 (DSLR), and Glu275. A Zn(2+)-binding site is contributed by His279. Tyr302 contacts substrate. Residue His343 coordinates Zn(2+). The [4Fe-4S] cluster site is built by Cys423, Cys426, and Cys431.

The protein belongs to the ThiC family. [4Fe-4S] cluster serves as cofactor.

It carries out the reaction 5-amino-1-(5-phospho-beta-D-ribosyl)imidazole + S-adenosyl-L-methionine = 4-amino-2-methyl-5-(phosphooxymethyl)pyrimidine + CO + 5'-deoxyadenosine + formate + L-methionine + 3 H(+). It participates in cofactor biosynthesis; thiamine diphosphate biosynthesis. Functionally, catalyzes the synthesis of the hydroxymethylpyrimidine phosphate (HMP-P) moiety of thiamine from aminoimidazole ribotide (AIR) in a radical S-adenosyl-L-methionine (SAM)-dependent reaction. The protein is Phosphomethylpyrimidine synthase of Prochlorococcus marinus (strain AS9601).